A 66-amino-acid chain; its full sequence is Large ribosomal subunit protein bL35 (66 aa).

It belongs to the bacterial ribosomal protein bL35 family.

The chain is Large ribosomal subunit protein bL35 from Borrelia garinii subsp. bavariensis (strain ATCC BAA-2496 / DSM 23469 / PBi) (Borreliella bavariensis).